Consider the following 401-residue polypeptide: Probable 2,3-bisphosphoglycerate-independent phosphoglycerate mutase (401 aa).

The protein belongs to the BPG-independent phosphoglycerate mutase family. A-PGAM subfamily.

The enzyme catalyses (2R)-2-phosphoglycerate = (2R)-3-phosphoglycerate. It participates in carbohydrate degradation; glycolysis; pyruvate from D-glyceraldehyde 3-phosphate: step 3/5. In terms of biological role, catalyzes the interconversion of 2-phosphoglycerate and 3-phosphoglycerate. This Thermotoga sp. (strain RQ2) protein is Probable 2,3-bisphosphoglycerate-independent phosphoglycerate mutase.